The chain runs to 737 residues: Catalase-peroxidase (737 aa).

The signal sequence occupies residues 1 to 23 (MLKKILPVLITLAIVHNTPTAWA). Positions 102-223 (WHGAGTYRIY…LAATQMGLIY (122 aa)) form a cross-link, tryptophyl-tyrosyl-methioninium (Trp-Tyr) (with M-249). Residue His103 is the Proton acceptor of the active site. Positions 223–249 (YVNPEGPNGKPDPVAAAKDIREAFARM) form a cross-link, tryptophyl-tyrosyl-methioninium (Tyr-Met) (with W-102). His264 lines the heme b pocket.

Belongs to the peroxidase family. Peroxidase/catalase subfamily. As to quaternary structure, homodimer or homotetramer. Heme b is required as a cofactor. Post-translationally, formation of the three residue Trp-Tyr-Met cross-link is important for the catalase, but not the peroxidase activity of the enzyme.

It carries out the reaction H2O2 + AH2 = A + 2 H2O. The catalysed reaction is 2 H2O2 = O2 + 2 H2O. Functionally, bifunctional enzyme with both catalase and broad-spectrum peroxidase activity. This is Catalase-peroxidase from Yersinia pseudotuberculosis serotype O:3 (strain YPIII).